Consider the following 88-residue polypeptide: Adenylosuccinate lyase (88 aa).

Residues 4 to 5 (RY) and 67 to 69 (KHD) each bind N(6)-(1,2-dicarboxyethyl)-AMP.

The protein belongs to the lyase 1 family. Adenylosuccinate lyase subfamily. Homotetramer and homodimer. Residues from neighboring subunits contribute catalytic and substrate-binding residues to each active site.

It catalyses the reaction N(6)-(1,2-dicarboxyethyl)-AMP = fumarate + AMP. The enzyme catalyses (2S)-2-[5-amino-1-(5-phospho-beta-D-ribosyl)imidazole-4-carboxamido]succinate = 5-amino-1-(5-phospho-beta-D-ribosyl)imidazole-4-carboxamide + fumarate. The protein operates within purine metabolism; AMP biosynthesis via de novo pathway; AMP from IMP: step 2/2. It functions in the pathway purine metabolism; IMP biosynthesis via de novo pathway; 5-amino-1-(5-phospho-D-ribosyl)imidazole-4-carboxamide from 5-amino-1-(5-phospho-D-ribosyl)imidazole-4-carboxylate: step 2/2. Catalyzes two reactions in de novo purine nucleotide biosynthesis. Catalyzes the breakdown of 5-aminoimidazole- (N-succinylocarboxamide) ribotide (SAICAR or 2-[5-amino-1-(5-phospho-beta-D-ribosyl)imidazole-4-carboxamido]succinate) to 5-aminoimidazole-4-carboxamide ribotide (AICAR or 5-amino-1-(5-phospho-beta-D-ribosyl)imidazole-4-carboxamide) and fumarate, and of adenylosuccinate (ADS or N(6)-(1,2-dicarboxyethyl)-AMP) to adenosine monophosphate (AMP) and fumarate. In Spiroplasma citri, this protein is Adenylosuccinate lyase (purB).